The sequence spans 327 residues: Probable cell division protein WhiA (327 aa).

Positions 275-308 (SLEELGRLADPPMTKDAVAGRIRRLLSMADRKAK) form a DNA-binding region, H-T-H motif.

Belongs to the WhiA family.

In terms of biological role, involved in cell division and chromosome segregation. This chain is Probable cell division protein WhiA, found in Mycobacterium bovis (strain ATCC BAA-935 / AF2122/97).